Here is a 400-residue protein sequence, read N- to C-terminus: Elongation factor Tu (400 aa).

Residues 10-210 (KPHVNVGTIG…ALDSYIPEPV (201 aa)) form the tr-type G domain. Residues 19–26 (GHVDHGKT) are G1. 19–26 (GHVDHGKT) is a binding site for GTP. Thr-26 serves as a coordination point for Mg(2+). The interval 66-70 (ILTIA) is G2. Residues 87–90 (DCPG) form a G3 region. GTP-binding positions include 87–91 (DCPGH) and 142–145 (NKCD). A G4 region spans residues 142-145 (NKCD). Residues 180 to 182 (SAI) form a G5 region.

This sequence belongs to the TRAFAC class translation factor GTPase superfamily. Classic translation factor GTPase family. EF-Tu/EF-1A subfamily. As to quaternary structure, monomer.

Its subcellular location is the cytoplasm. The enzyme catalyses GTP + H2O = GDP + phosphate + H(+). GTP hydrolase that promotes the GTP-dependent binding of aminoacyl-tRNA to the A-site of ribosomes during protein biosynthesis. The polypeptide is Elongation factor Tu (Gemmatimonas aurantiaca (strain DSM 14586 / JCM 11422 / NBRC 100505 / T-27)).